The primary structure comprises 395 residues: Protein phosphatase methylesterase 1 (395 aa).

Active-site residues include S194, D222, and H348.

It belongs to the AB hydrolase superfamily.

It catalyses the reaction [phosphatase 2A protein]-C-terminal L-leucine methyl ester + H2O = [phosphatase 2A protein]-C-terminal L-leucine + methanol + H(+). Demethylates proteins that have been reversibly carboxymethylated. Demethylates the phosphatase PP2A catalytic subunit. The polypeptide is Protein phosphatase methylesterase 1 (PPE1) (Kluyveromyces lactis (strain ATCC 8585 / CBS 2359 / DSM 70799 / NBRC 1267 / NRRL Y-1140 / WM37) (Yeast)).